The following is a 308-amino-acid chain: Putative cathepsin L 3 (308 aa).

The first 21 residues, Met-1–Leu-21, serve as a signal peptide directing secretion. A propeptide spans Gln-22–Glu-110 (activation peptide). Disulfide bonds link Cys-129/Cys-170 and Cys-254/Cys-298. Active-site residues include His-261 and Asn-278.

This sequence belongs to the peptidase C1 family.

The protein resides in the secreted. The enzyme catalyses Specificity close to that of papain. As compared to cathepsin B, cathepsin L exhibits higher activity toward protein substrates, but has little activity on Z-Arg-Arg-NHMec, and no peptidyl-dipeptidase activity.. In terms of biological role, may be involved in extracellular digestion. This chain is Putative cathepsin L 3, found in Paramecium tetraurelia.